Consider the following 261-residue polypeptide: MTCGLLSVTVTFRRPAKWPGYFRHLCCRGAVMDLGPMRKSYRGDREAFEEAHLTSLDPMKQFASWFEEAVQCPDIGEANAMCLATCTRDGKPSARMLLLKGFGKDGFRFFTNYESRKGKELDSNPFASLVFYWEPLNRQVRVEGPVKKLPEKEAENYFHSRPKSSQIGAVVSRQSSVIPDREYLRKKNEELGQLYREQEVPKPEYWGGYILYPQVMEFWQGQTNRLHDRIVFRRGLATGDSPLGPMTHHGEEDWVYERLAP.

Residue 42-45 participates in pyridoxal 5'-phosphate binding; it reads RGDR. FMN is bound at residue 95–98; the sequence is RMLL. K100 is a binding site for pyridoxal 5'-phosphate. FMN-binding positions include 110–111, 116–117, and Q139; these read FT and RK. Y157, R161, and S165 together coordinate pyridoxal 5'-phosphate. FMN-binding positions include 174-175 and W219; that span reads QS. Position 225 to 227 (225 to 227) interacts with pyridoxal 5'-phosphate; the sequence is RLH. R229 is an FMN binding site. Residue T238 is modified to Phosphothreonine. Position 241 is a phosphoserine (S241).

It belongs to the pyridoxamine 5'-phosphate oxidase family. In terms of assembly, homodimer. FMN serves as cofactor. Detected in adult liver.

It carries out the reaction pyridoxamine 5'-phosphate + O2 + H2O = pyridoxal 5'-phosphate + H2O2 + NH4(+). The enzyme catalyses pyridoxine 5'-phosphate + O2 = pyridoxal 5'-phosphate + H2O2. Its pathway is cofactor metabolism; pyridoxal 5'-phosphate salvage; pyridoxal 5'-phosphate from pyridoxamine 5'-phosphate: step 1/1. It participates in cofactor metabolism; pyridoxal 5'-phosphate salvage; pyridoxal 5'-phosphate from pyridoxine 5'-phosphate: step 1/1. Its function is as follows. Catalyzes the oxidation of either pyridoxine 5'-phosphate (PNP) or pyridoxamine 5'-phosphate (PMP) into pyridoxal 5'-phosphate (PLP). The polypeptide is Pyridoxine-5'-phosphate oxidase (Pnpo) (Rattus norvegicus (Rat)).